The chain runs to 231 residues: DNA mismatch repair protein MutH (231 aa).

It belongs to the MutH family.

It localises to the cytoplasm. Sequence-specific endonuclease that cleaves unmethylated GATC sequences. It is involved in DNA mismatch repair. This Klebsiella pneumoniae (strain 342) protein is DNA mismatch repair protein MutH.